Consider the following 1275-residue polypeptide: uncharacterized protein (1275 aa).

This is an uncharacterized protein from Homo sapiens (Human).